We begin with the raw amino-acid sequence, 272 residues long: Tryptophan synthase alpha chain (272 aa).

Active-site proton acceptor residues include Glu-60 and Asp-71.

This sequence belongs to the TrpA family. As to quaternary structure, tetramer of two alpha and two beta chains.

It catalyses the reaction (1S,2R)-1-C-(indol-3-yl)glycerol 3-phosphate + L-serine = D-glyceraldehyde 3-phosphate + L-tryptophan + H2O. It participates in amino-acid biosynthesis; L-tryptophan biosynthesis; L-tryptophan from chorismate: step 5/5. Functionally, the alpha subunit is responsible for the aldol cleavage of indoleglycerol phosphate to indole and glyceraldehyde 3-phosphate. In Methanosarcina acetivorans (strain ATCC 35395 / DSM 2834 / JCM 12185 / C2A), this protein is Tryptophan synthase alpha chain.